We begin with the raw amino-acid sequence, 27 residues long: Metalloproteinase inhibitor 1 (27 aa).

Over residues 1 to 12 (IEPERQEEEEEE) the composition is skewed to acidic residues. Residues 1-27 (IEPERQEEEEEETRQRVRRGQVRQQQQ) are disordered.

Functionally, metalloproteinase inhibitor, active on a globulinase from L.albus seeds, thermolysin and gelatinase B. The sequence is that of Metalloproteinase inhibitor 1 from Lupinus albus (White lupine).